A 314-amino-acid polypeptide reads, in one-letter code: MSHNKMENNDCICGNNSQPIENNKCSISFIVNDYINTKNTNTAPTTNNNNNNNNSSRDFFDPLTNSNRRCYVINFLNSVCYIRNQPYNIIIHRNAIEKICDCRIFIANEISIYNSLKTKDDLFLNMINLTSFINDCVTELIFLDSFQSSLVIDIQMFSNEIGTRNVPNRKIPTPVLPPLVSDNNSTNLQNQISSQTITSQSPHINNNNTITDANLFPRKRRLNVNNYIVKETMELSKKLRTTNQTSDDYNTPKIIRKLKLRPGDCYMCPNIESNNWRNFIFNGQHITLCNACGLRMIKINKKEKEIQNSMFTTR.

This Dictyostelium discoideum (Social amoeba) protein is GATA zinc finger domain-containing protein 19 (gtaS).